The following is a 336-amino-acid chain: Ketol-acid reductoisomerase (NADP(+)) 1 (336 aa).

The KARI N-terminal Rossmann domain occupies 2-181; it reads AKVYYEKDVT…GATRAGVLET (180 aa). NADP(+)-binding positions include 25 to 28, Arg-48, Ser-52, and 82 to 85; these read YGSQ and DELQ. His-107 is an active-site residue. Position 133 (Gly-133) interacts with NADP(+). The KARI C-terminal knotted domain maps to 182–327; the sequence is TFKEETETDL…RKLREMMPFV (146 aa). Mg(2+) contacts are provided by Asp-190, Glu-194, Glu-226, and Glu-230. Ser-251 contributes to the substrate binding site.

It belongs to the ketol-acid reductoisomerase family. Mg(2+) is required as a cofactor.

The catalysed reaction is (2R)-2,3-dihydroxy-3-methylbutanoate + NADP(+) = (2S)-2-acetolactate + NADPH + H(+). The enzyme catalyses (2R,3R)-2,3-dihydroxy-3-methylpentanoate + NADP(+) = (S)-2-ethyl-2-hydroxy-3-oxobutanoate + NADPH + H(+). It functions in the pathway amino-acid biosynthesis; L-isoleucine biosynthesis; L-isoleucine from 2-oxobutanoate: step 2/4. The protein operates within amino-acid biosynthesis; L-valine biosynthesis; L-valine from pyruvate: step 2/4. In terms of biological role, involved in the biosynthesis of branched-chain amino acids (BCAA). Catalyzes an alkyl-migration followed by a ketol-acid reduction of (S)-2-acetolactate (S2AL) to yield (R)-2,3-dihydroxy-isovalerate. In the isomerase reaction, S2AL is rearranged via a Mg-dependent methyl migration to produce 3-hydroxy-3-methyl-2-ketobutyrate (HMKB). In the reductase reaction, this 2-ketoacid undergoes a metal-dependent reduction by NADPH to yield (R)-2,3-dihydroxy-isovalerate. This Bacillus cereus (strain ZK / E33L) protein is Ketol-acid reductoisomerase (NADP(+)) 1.